Consider the following 338-residue polypeptide: Ketol-acid reductoisomerase (NADP(+)) (338 aa).

The KARI N-terminal Rossmann domain maps to 1–181 (MKVFYDKDCD…GGGRAGIIET (181 aa)). Residues 24–27 (YGSQ), R47, and S52 each bind NADP(+). Residue H107 is part of the active site. G133 serves as a coordination point for NADP(+). The KARI C-terminal knotted domain maps to 182-327 (NFREETETDL…GKLRAMMPWI (146 aa)). Positions 190, 194, 226, and 230 each coordinate Mg(2+). S251 lines the substrate pocket.

The protein belongs to the ketol-acid reductoisomerase family. The cofactor is Mg(2+).

It catalyses the reaction (2R)-2,3-dihydroxy-3-methylbutanoate + NADP(+) = (2S)-2-acetolactate + NADPH + H(+). The enzyme catalyses (2R,3R)-2,3-dihydroxy-3-methylpentanoate + NADP(+) = (S)-2-ethyl-2-hydroxy-3-oxobutanoate + NADPH + H(+). The protein operates within amino-acid biosynthesis; L-isoleucine biosynthesis; L-isoleucine from 2-oxobutanoate: step 2/4. Its pathway is amino-acid biosynthesis; L-valine biosynthesis; L-valine from pyruvate: step 2/4. Its function is as follows. Involved in the biosynthesis of branched-chain amino acids (BCAA). Catalyzes an alkyl-migration followed by a ketol-acid reduction of (S)-2-acetolactate (S2AL) to yield (R)-2,3-dihydroxy-isovalerate. In the isomerase reaction, S2AL is rearranged via a Mg-dependent methyl migration to produce 3-hydroxy-3-methyl-2-ketobutyrate (HMKB). In the reductase reaction, this 2-ketoacid undergoes a metal-dependent reduction by NADPH to yield (R)-2,3-dihydroxy-isovalerate. The chain is Ketol-acid reductoisomerase (NADP(+)) from Bordetella pertussis (strain Tohama I / ATCC BAA-589 / NCTC 13251).